The sequence spans 656 residues: Nuclear elongation and deformation protein 1 (656 aa).

Phosphoserine occurs at positions 99 and 103. A compositionally biased stretch (polar residues) spans 99–118; the sequence is SPIVSPTTSPKQTPSINVTE. Residues 99–121 form a disordered region; it reads SPIVSPTTSPKQTPSINVTEPQD. T106 carries the post-translational modification Phosphothreonine. Phosphoserine occurs at positions 107, 159, and 286. Disordered regions lie at residues 282–328 and 587–656; these read VYGH…VSES and SDEE…ENAV. A compositionally biased stretch (low complexity) spans 291–300; the sequence is PSRTPASPKS. S318, S321, and S587 each carry phosphoserine. Positions 318 to 328 are enriched in polar residues; sequence SEQSLSPVSES. A compositionally biased stretch (low complexity) spans 596 to 609; that stretch reads KSTSKSPKTPKNTK. Acidic residues predominate over residues 640–656; the sequence is FEGEEDEEGEEDVENAV.

It belongs to the lipin family. Interacts with dis3, pim1 and nup189.

Its function is as follows. May have a role in the maintenance of the nuclear envelope structure and in minichromosome stability. The sequence is that of Nuclear elongation and deformation protein 1 (ned1) from Schizosaccharomyces pombe (strain 972 / ATCC 24843) (Fission yeast).